The following is a 734-amino-acid chain: Mechanosensitive ion channel protein 10 (734 aa).

2 disordered regions span residues 1 to 75 (MAEQ…LTQR) and 115 to 136 (SFSR…APVT). Residues 24-39 (EASRRSKEMASPESEK) show a composition bias toward basic and acidic residues. Ser-34 is subject to Phosphoserine. Polar residues-rich tracts occupy residues 65-75 (PNQNNVGLTQR) and 117-129 (SRAS…NRSV). Phosphoserine is present on residues Ser-128 and Ser-131. 6 helical membrane passes run 164-184 (ISTL…ALVA), 196-216 (FWGL…SGML), 249-269 (SVQV…LFNH), 288-308 (LISI…LKIL), 516-536 (LVTA…LEVA), and 551-571 (LAFI…FVFV).

The protein belongs to the MscS (TC 1.A.23) family. Detected in the root tip and throughout the vasculature of the root and leaf.

Its subcellular location is the cell membrane. Mechanosensitive channel that opens in response to stretch forces in the membrane lipid bilayer. The sequence is that of Mechanosensitive ion channel protein 10 (MSL10) from Arabidopsis thaliana (Mouse-ear cress).